We begin with the raw amino-acid sequence, 561 residues long: Tectonic-like complex member MKS1 (561 aa).

The C2 B9-type domain occupies 314 to 442 (LRLFVNGEVV…TASTWRPMEL (129 aa)).

In terms of assembly, part of the tectonic-like complex (also named B9 complex). Interacts with TMEM107. Interacts with TCTN3, AHI1, TCTN1, TCTN2, CC2D2A. Interacts with FLNA. Interacts with TMEM67. Interacts with B9D1 and B9D2.

The protein resides in the cytoplasm. It is found in the cytoskeleton. It localises to the cilium basal body. Its subcellular location is the microtubule organizing center. The protein localises to the centrosome. Component of the tectonic-like complex, a complex localized at the transition zone of primary cilia and acting as a barrier that prevents diffusion of transmembrane proteins between the cilia and plasma membranes. Involved in centrosome migration to the apical cell surface during early ciliogenesis. Required for ciliary structure and function, including a role in regulating length and appropriate number through modulating centrosome duplication. Required for cell branching morphology. This Rattus norvegicus (Rat) protein is Tectonic-like complex member MKS1 (Mks1).